The sequence spans 70 residues: U2-agatoxin-Ao1q (70 aa).

Positions Met-1–Ala-20 are cleaved as a signal peptide. A propeptide spanning residues Val-21–Arg-34 is cleaved from the precursor. 2 disulfide bridges follow: Cys-44/Cys-58 and Cys-52/Cys-68. Leu-69 carries the leucine amide modification.

It belongs to the neurotoxin 01 (U2-agtx) family. Post-translationally, does not contain a cysteine at position 53 which disrupts the cysteine framework. In terms of tissue distribution, expressed by the venom gland.

It localises to the secreted. Insect active toxin causing rapid but reversible paralysis in crickets. No activity shown in mammals. Does not show effect on mammalian voltage-gated calcium channels. This Agelena orientalis (Funnel-web spider) protein is U2-agatoxin-Ao1q.